We begin with the raw amino-acid sequence, 610 residues long: UvrABC system protein C (610 aa).

Positions 13–91 (HLPGVYRMYD…IKENQPKYNV (79 aa)) constitute a GIY-YIG domain. Positions 201 to 236 (GQVVEHLVQKMENAAQELDFEAAARFRDQIQSVRAV) constitute a UVR domain.

This sequence belongs to the UvrC family. Interacts with UvrB in an incision complex.

The protein resides in the cytoplasm. Functionally, the UvrABC repair system catalyzes the recognition and processing of DNA lesions. UvrC both incises the 5' and 3' sides of the lesion. The N-terminal half is responsible for the 3' incision and the C-terminal half is responsible for the 5' incision. The chain is UvrABC system protein C from Actinobacillus pleuropneumoniae serotype 5b (strain L20).